Consider the following 522-residue polypeptide: Glutamate--cysteine ligase, chloroplastic (522 aa).

Intrachain disulfides connect C186–C406 and C349–C364.

This sequence belongs to the carboxylate-amine ligase family. Glutamate--cysteine ligase type 2 subfamily. Homodimer or monomer when oxidized or reduced, respectively. The Cys-186-Cys-406 disulfide bridge is known to modulate the enzyme activity according to the redox status. The oxidized form constitutes the active enzyme. In terms of tissue distribution, abundant in leaves and roots. Expressed to a high level in leaf trichomes of mature plant.

It is found in the plastid. It localises to the chloroplast. It catalyses the reaction L-cysteine + L-glutamate + ATP = gamma-L-glutamyl-L-cysteine + ADP + phosphate + H(+). The protein operates within sulfur metabolism; glutathione biosynthesis; glutathione from L-cysteine and L-glutamate: step 1/2. Feedback inhibition by glutathione. Inhibited by buthionine sulfoximine and cystamine. Its function is as follows. Seems to play an important role in controlling the expression of resistance responses like the regulation of salicylic acid (SA) and phytoalexin (camalexin) production. Involved in resistance to fungal and bacterial pathogens. Required for the regulation of cell proliferation in root apical meristems through the GSH-dependent developmental pathway. Also participates in the detoxification process, the antioxidant response and is essential for embryo development and proper seed maturation. The chain is Glutamate--cysteine ligase, chloroplastic (GSH1) from Arabidopsis thaliana (Mouse-ear cress).